The sequence spans 433 residues: N-lysine methyltransferase SMYD2 (433 aa).

The SET domain maps to 7–241 (GGLERFCSPG…PGEEVFTSYI (235 aa)). Residue 17-19 (KGR) participates in S-adenosyl-L-methionine binding. The Zn(2+) site is built by C52, C55, C65, C68, C74, C78, H86, and C90. An MYND-type zinc finger spans residues 52 to 90 (CEFCFARKEGLSKCGRCKQAFYCNVECQREDWPMHKLEC). Residues H137, 206 to 207 (NH), and 258 to 260 (YFF) contribute to the S-adenosyl-L-methionine site.

It belongs to the class V-like SAM-binding methyltransferase superfamily. As to quaternary structure, interacts with RNA polymerase II and HELZ. Interacts with SIN3A and HDAC1. Interacts (via MYND-type zinc finger) with EPB41L3. Interacts (via SET domain) with p53/TP53. Interacts with RB1 and HSP90AA1.

Its subcellular location is the cytoplasm. The protein localises to the cytosol. The protein resides in the nucleus. The enzyme catalyses L-lysyl(4)-[histone H3] + 3 S-adenosyl-L-methionine = N(6),N(6),N(6)-trimethyl-L-lysyl(4)-[histone H3] + 3 S-adenosyl-L-homocysteine + 3 H(+). It catalyses the reaction L-lysyl-[protein] + S-adenosyl-L-methionine = N(6)-methyl-L-lysyl-[protein] + S-adenosyl-L-homocysteine + H(+). In terms of biological role, protein-lysine N-methyltransferase that methylates both histones and non-histone proteins, including p53/TP53 and RB1. Specifically trimethylates histone H3 'Lys-4' (H3K4me3) in vivo. The activity requires interaction with HSP90alpha. Shows even higher methyltransferase activity on p53/TP53. Monomethylates 'Lys-370' of p53/TP53, leading to decreased DNA-binding activity and subsequent transcriptional regulation activity of p53/TP53. Monomethylates RB1 at 'Lys-860'. This chain is N-lysine methyltransferase SMYD2 (SMYD2), found in Bos taurus (Bovine).